A 369-amino-acid chain; its full sequence is Terpene cyclase DEP1 (369 aa).

8 helical membrane passes run 9 to 29, 82 to 102, 118 to 138, 157 to 177, 190 to 210, 234 to 254, 298 to 318, and 342 to 362; these read FFYL…FNGM, LLFF…LIES, AMVL…LYLV, ALLV…VPAW, IALF…LASI, LVLA…GALI, LFSQ…SHLL, and LVYL…SFAL.

It belongs to the membrane-bound ascI terpene cyclase family.

It is found in the membrane. Its pathway is polyketide biosynthesis. In terms of biological role, part of the gene cluster that mediates the biosynthesis of depudecin, a highly oxidized eleven-carbon linear polyketide that acts as a histone deacetylase (HDAC) inhibitor and makes a small contribution to pathogenesis. The reducing polyketide synthase DEP5 is the central enzyme in depudecin biosynthesis by yielding the backbone polyketide chain. The monooxygenases DEP2 and DEP4, as well as the uncharacterized protein DEP1, then act as tailoring enzymes to modify the intermediate polyketide chain into depudecin. The sequence is that of Terpene cyclase DEP1 from Alternaria brassicicola (Dark leaf spot agent).